The sequence spans 663 residues: Putative glucosamine-6-phosphate deaminase-like protein BT_0258 (663 aa).

A glucosamine-6-phosphate deaminase-like region spans residues 1–290 (MKTNLSSQIT…NLTRIQRPWL (290 aa)). Glutamate 184 is an active-site residue.

It in the N-terminal section; belongs to the glucosamine/galactosamine-6-phosphate isomerase family. NagB subfamily.

The polypeptide is Putative glucosamine-6-phosphate deaminase-like protein BT_0258 (Bacteroides thetaiotaomicron (strain ATCC 29148 / DSM 2079 / JCM 5827 / CCUG 10774 / NCTC 10582 / VPI-5482 / E50)).